Here is a 329-residue protein sequence, read N- to C-terminus: D-threo-aldose 1-dehydrogenase (329 aa).

The active-site Proton donor is the Tyr-58. Position 145 (His-145) interacts with substrate.

It belongs to the aldo/keto reductase family.

It carries out the reaction a D-threo-aldose + NAD(+) = a D-threo-aldono-1,5-lactone + NADH + H(+). Its activity is regulated as follows. Inhibited strongly by Hg(2+), Cd(2+) and para-chloromercuribenzoic acid (PCMB) and weakly by Zn(2+) and iodoacetamide. Also inhibited strongly by L-xylose but not D-glucose. In terms of biological role, catalyzes the oxidation of L-fucose to L-fuconolactone in the presence of NADP(+). Also active against L-galactose and, to a much lesser degree, D-arabinose. Uses NADP(+) as a hydrogen acceptor much more efficiently than NAD(+). This Pseudomonas sp protein is D-threo-aldose 1-dehydrogenase.